The following is a 170-amino-acid chain: Cathelicidin antimicrobial peptide (170 aa).

Residues 1–30 form the signal peptide; the sequence is MKTQRDSPSLGRWSLVLLLLGLVMPLAIVA. Residues 31 to 131 constitute a propeptide, cathelin-like domain (CLD); the sequence is QVLSYQEAVL…DISCDKDNRR (101 aa). Cystine bridges form between Cys-86–Cys-97 and Cys-108–Cys-125. The tract at residues 150 to 162 is active core; that stretch reads LKKVGQKIKDFLG.

Belongs to the cathelicidin family. In terms of assembly, monomer, homodimer or homotrimer (in vitro). Oligomerizes as tetra- or hexamer in solution (in vitro). In terms of processing, proteolytically cleaved by proteinase PRTN3 into antibacterial peptide LL-37. Proteolytically cleaved by cathepsin CTSG and neutrophil elastase ELANE. Resistant to proteolytic degradation in solution, and when bound to both zwitterionic (mimicking mammalian membranes) and negatively charged membranes (mimicking bacterial membranes). Post-translationally, after secretion onto the skin surface, the CAMP gene product is processed by a serine protease-dependent mechanism into multiple novel antimicrobial peptides distinct from and shorter than cathelicidin LL-37. These peptides show enhanced antimicrobial action, acquiring the ability to kill skin pathogens such as S.aureus, E.coli and C.albicans. These peptides have lost the ability to stimulate CXCL8/IL8 release from keratinocytes. The peptides act synergistically, killing bacteria at lower concentrations when present together, and maintain activity at increased salt condition.

It is found in the secreted. It localises to the vesicle. Its function is as follows. Antimicrobial protein that is an integral component of the innate immune system. Binds to bacterial lipopolysaccharides (LPS). Acts via neutrophil N-formyl peptide receptors to enhance the release of CXCL2. Postsecretory processing generates multiple cathelicidin antimicrobial peptides with various lengths which act as a topical antimicrobial defense in sweat on skin. The unprocessed precursor form, cathelicidin antimicrobial peptide, inhibits the growth of Gram-negative E.coli and E.aerogenes with efficiencies comparable to that of the mature peptide LL-37 (in vitro). In terms of biological role, antimicrobial peptide that is an integral component of the innate immune system. Binds to bacterial lipopolysaccharides (LPS). Causes membrane permeabilization by forming transmembrane pores (in vitro). Causes lysis of E.coli. Exhibits antimicrobial activity against Gram-negative bacteria such as P.aeruginosa, S.typhimurium, E.aerogenes, E.coli and P.syringae, Gram-positive bacteria such as L.monocytogenes, S.epidermidis, S.pyogenes and S.aureus, as well as vancomycin-resistant enterococci (in vitro). Exhibits antimicrobial activity against methicillin-resistant S.aureus, P.mirabilis, and C.albicans in low-salt media, but not in media containing 100 mM NaCl (in vitro). Forms chiral supramolecular assemblies with quinolone signal (PQS) molecules of P.aeruginosa, which may lead to interference of bacterial quorum signaling and perturbance of bacterial biofilm formation. May form supramolecular fiber-like assemblies on bacterial membranes. Induces cytokine and chemokine producation as well as TNF/TNFA and CSF2/GMCSF production in normal human keratinocytes. Exhibits hemolytic activity against red blood cells. Exhibits antimicrobial activity against E.coli and B.megaterium (in vitro). The protein is Cathelicidin antimicrobial peptide of Macaca fascicularis (Crab-eating macaque).